Here is a 491-residue protein sequence, read N- to C-terminus: Glycogen synthase 2 (491 aa).

Lys16 is an ADP-alpha-D-glucose binding site.

The protein belongs to the glycosyltransferase 1 family. Bacterial/plant glycogen synthase subfamily.

The enzyme catalyses [(1-&gt;4)-alpha-D-glucosyl](n) + ADP-alpha-D-glucose = [(1-&gt;4)-alpha-D-glucosyl](n+1) + ADP + H(+). It participates in glycan biosynthesis; glycogen biosynthesis. Synthesizes alpha-1,4-glucan chains using ADP-glucose. The sequence is that of Glycogen synthase 2 from Nitrosococcus oceani (strain ATCC 19707 / BCRC 17464 / JCM 30415 / NCIMB 11848 / C-107).